The chain runs to 165 residues: Large ribosomal subunit protein uL10 (165 aa).

It belongs to the universal ribosomal protein uL10 family. Part of the ribosomal stalk of the 50S ribosomal subunit. The N-terminus interacts with L11 and the large rRNA to form the base of the stalk. The C-terminus forms an elongated spine to which L12 dimers bind in a sequential fashion forming a multimeric L10(L12)X complex.

Functionally, forms part of the ribosomal stalk, playing a central role in the interaction of the ribosome with GTP-bound translation factors. In Borrelia turicatae (strain 91E135), this protein is Large ribosomal subunit protein uL10.